Here is a 248-residue protein sequence, read N- to C-terminus: Myelin protein P0 (248 aa).

Positions 1-29 (MAPGAPSSSPSPILAALLFSSLVLSPALA) are cleaved as a signal peptide. In terms of domain architecture, Ig-like V-type spans 30–143 (IVVYTDREIY…DIVGKTSQVT (114 aa)). The Extracellular segment spans residues 30 to 153 (IVVYTDREIY…LYVFEKVPTR (124 aa)). Cysteines 50 and 127 form a disulfide. The N-linked (GlcNAc...) (complex) asparagine glycan is linked to Asn122. The helical transmembrane segment at 154–179 (YGVVLGAVIGGILGVVLLLLLLFYLI) threads the bilayer. The Cytoplasmic portion of the chain corresponds to 180-248 (RYCWLRRQAA…GLGESRKDKK (69 aa)). At Ser210 the chain carries Phosphoserine; by PKC. Residues 222–248 (MLDHSRSTKAASEKKSKGLGESRKDKK) are disordered. Basic and acidic residues predominate over residues 224–248 (DHSRSTKAASEKKSKGLGESRKDKK). Phosphoserine occurs at positions 226 and 228. Ser233 is subject to Phosphoserine; by PKC. Phosphoserine is present on residues Ser237 and Ser243.

The protein belongs to the myelin P0 protein family. In terms of assembly, homodimer and homotetramer. Post-translationally, N-glycosylated; contains sulfate-substituted glycan. Found only in peripheral nervous system Schwann cells.

The protein localises to the cell membrane. In terms of biological role, is an adhesion molecule necessary for normal myelination in the peripheral nervous system. It mediates adhesion between adjacent myelin wraps and ultimately drives myelin compaction. In Mus musculus (Mouse), this protein is Myelin protein P0 (Mpz).